The sequence spans 262 residues: Small ribosomal subunit protein uS2 (262 aa).

This sequence belongs to the universal ribosomal protein uS2 family.

The chain is Small ribosomal subunit protein uS2 from Borreliella burgdorferi (strain ZS7) (Borrelia burgdorferi).